The primary structure comprises 280 residues: UPF0276 protein CC_2906 (280 aa).

Belongs to the UPF0276 family.

In Caulobacter vibrioides (strain ATCC 19089 / CIP 103742 / CB 15) (Caulobacter crescentus), this protein is UPF0276 protein CC_2906.